Consider the following 392-residue polypeptide: O-phospho-L-seryl-tRNA:Cys-tRNA synthase (392 aa).

Pyridoxal 5'-phosphate is bound by residues 84–85 (AR), asparagine 191, and 214–216 (SGH). Lysine 217 is modified (N6-(pyridoxal phosphate)lysine).

Belongs to the SepCysS family. Homodimer. Interacts with SepRS. Pyridoxal 5'-phosphate serves as cofactor.

The enzyme catalyses O-phospho-L-seryl-tRNA(Cys) + hydrogen sulfide + H(+) = L-cysteinyl-tRNA(Cys) + phosphate. Its function is as follows. Converts O-phospho-L-seryl-tRNA(Cys) (Sep-tRNA(Cys)) to L-cysteinyl-tRNA(Cys) (Cys-tRNA(Cys)). This chain is O-phospho-L-seryl-tRNA:Cys-tRNA synthase, found in Methanopyrus kandleri (strain AV19 / DSM 6324 / JCM 9639 / NBRC 100938).